The following is a 106-amino-acid chain: SH3 domain-binding glutamic acid-rich-like protein 2-A (106 aa).

The SH3-binding motif lies at Q61–P67.

The protein belongs to the SH3BGR family.

It is found in the nucleus. The protein is SH3 domain-binding glutamic acid-rich-like protein 2-A (sh3bgrl2-a) of Xenopus laevis (African clawed frog).